Reading from the N-terminus, the 908-residue chain is MKIISPVLSNLVFSRSIKVLLCLLWIGYSQGTTHVLRFGGIFEYVESGPMGAEELAFRFAVNTINRNRTLLPNTTLTYDTQKINLYDSFEASKKACDQLSLGVAAIFGPSHSSSANAVQSICNALGVPHIQTRWKHQVSDNKDSFYVSLYPDFSSLSRAILDLVQFFKWKTVTVVYDDSTGLIRLQELIKAPSRYNLRLKIRQLPADTKDAKPLLKEMKRGKEFHVIFDCSHEMAAGILKQALAMGMMTEYYHYIFTTLDLFALDVEPYRYSGVNMTGFRILNTENTQVSSIIEKWSMERLQAPPKPDSGLLDGFMTTDAALMYDAVHVVSVAVQQFPQMTVSSLQCNRHKPWRFGTRFMSLIKEAHWEGLTGRITFNKTNGLRTDFDLDVISLKEEGLEKIGTWDPASGLNMTESQKGKPANITDSLSNRSLIVTTILEEPYVLFKKSDKPLYGNDRFEGYCIDLLRELSTILGFTYEIRLVEDGKYGAQDDVNGQWNGMVRELIDHKADLAVAPLAITYVREKVIDFSKPFMTLGISILYRKPNGTNPGVFSFLNPLSPDIWMYILLAYLGVSCVLFVIARFSPYEWYNPHPCNPDSDVVENNFTLLNSFWFGVGALMQQGSELMPKALSTRIVGGIWWFFTLIIISSYTANLAAFLTVERMESPIDSADDLAKQTKIEYGAVEDGATMTFFKKSKISTYDKMWAFMSSRRQSVLVKSNEEGIQRVLTSDYAFLMESTTIEFVTQRNCNLTQIGGLIDSKGYGVGTPMGSPYRDKITIAILQLQEEGKLHMMKEKWWRGNGCPEEESKEASALGVQNIGGIFIVLAAGLVLSVFVAVGEFLYKSKKNAQLEKRSFCSAMVEELRMSLKCQRRLKHKPQAPVIVKTEEVINMHTFNDRRLPGKETMA.

Positions Met1–Gly31 are cleaved as a signal peptide. Residues Thr32–Pro561 are Extracellular-facing. N-linked (GlcNAc...) asparagine glycans are attached at residues Asn67, Asn73, Asn275, Asn378, Asn412, Asn423, and Asn430. A disulfide bond links Cys96 and Cys347. 3 residues coordinate L-glutamate: Pro516, Ala518, and Arg523. N-linked (GlcNAc...) asparagine glycosylation occurs at Asn546. Residues Asp562–Ala582 traverse the membrane as a helical segment. Topologically, residues Arg583–Gly638 are cytoplasmic. The chain crosses the membrane as a helical span at residues Ile639–Leu659. The Extracellular portion of the chain corresponds to Thr660–Asn819. 3 residues coordinate L-glutamate: Ala689, Thr690, and Glu738. A disulfide bridge links Cys750 with Cys804. Asn751 carries an N-linked (GlcNAc...) asparagine glycan. A helical membrane pass occupies residues Ile820 to Gly840. Residues Glu841 to Ala908 lie on the Cytoplasmic side of the membrane. Phosphoserine; by PKC occurs at positions 846 and 868. Residue Lys886 forms a Glycyl lysine isopeptide (Lys-Gly) (interchain with G-Cter in SUMO1) linkage.

It belongs to the glutamate-gated ion channel (TC 1.A.10.1) family. GRIK2 subfamily. Homotetramer and heterotetramer with GRIK5. Tetramers may be formed by the dimerization of dimers. Assembles into a kainate-gated homomeric channel that does not bind AMPA. Can form functional heteromeric receptors with GRIK4 and GRIK5. Can form functional heteromeric receptors with GRIK3. Interacts with DLG4. Interacts with NETO2. Interacts (via C-terminus) with KLHL17 (via kelch repeats); the interaction targets GRIK2 for degradation via ubiquitin-proteasome pathway. Sumoylation mediates kainate receptor-mediated endocytosis and regulates synaptic transmission. Sumoylation is enhanced by PIAS3 and desumoylated by SENP1. Post-translationally, ubiquitinated. Ubiquitination regulates the GRIK2 levels at the synapse by leading kainate receptor degradation through proteasome. In terms of processing, phosphorylated by PKC at Ser-868 upon agonist activation, this directly enhance sumoylation. Highest expression is found in the olfactory lobe, piriform cortex, dentate gyrus, hippocampus, granular cell layer of the cerebellum, and in caudate-putamen.

It is found in the cell membrane. It localises to the postsynaptic cell membrane. The catalysed reaction is Ca(2+)(in) = Ca(2+)(out). It carries out the reaction Na(+)(in) = Na(+)(out). Its activity is regulated as follows. Cold receptor activity activated by temperatures between 10-19 degrees Celsius. Its function is as follows. Ionotropic glutamate receptor that functions as a cation-permeable ligand-gated ion channel, gated by L-glutamate and the glutamatergic agonist kainic acid. L-glutamate acts as an excitatory neurotransmitter at many synapses in the central nervous system. Binding of the excitatory neurotransmitter L-glutamate induces a conformation change, leading to the opening of the cation channel, and thereby converts the chemical signal to an electrical impulse. The receptor then desensitizes rapidly and enters a transient inactive state, characterized by the presence of bound agonist. Modulates cell surface expression of NETO2. In association with GRIK3, involved in presynaptic facilitation of glutamate release at hippocampal mossy fiber synapses. Independent of its ionotropic glutamate receptor activity, acts as a thermoreceptor conferring sensitivity to cold temperatures. Functions in dorsal root ganglion neurons. The chain is Glutamate receptor ionotropic, kainate 2 (Grik2) from Rattus norvegicus (Rat).